The sequence spans 393 residues: S-adenosylmethionine synthase (393 aa).

ATP is bound at residue H16. A Mg(2+)-binding site is contributed by D18. E44 contributes to the K(+) binding site. L-methionine contacts are provided by E57 and Q100. Residues 100–110 (QSPDIVMGVDG) are flexible loop. ATP contacts are provided by residues 165-167 (DAK), 231-232 (RF), D240, 246-247 (RK), and K267. D240 is a binding site for L-methionine. K271 is a binding site for L-methionine.

The protein belongs to the AdoMet synthase family. Homotetramer; dimer of dimers. Requires Mg(2+) as cofactor. The cofactor is K(+).

It localises to the cytoplasm. The catalysed reaction is L-methionine + ATP + H2O = S-adenosyl-L-methionine + phosphate + diphosphate. It functions in the pathway amino-acid biosynthesis; S-adenosyl-L-methionine biosynthesis; S-adenosyl-L-methionine from L-methionine: step 1/1. Its function is as follows. Catalyzes the formation of S-adenosylmethionine (AdoMet) from methionine and ATP. The overall synthetic reaction is composed of two sequential steps, AdoMet formation and the subsequent tripolyphosphate hydrolysis which occurs prior to release of AdoMet from the enzyme. In Coxiella burnetii (strain Dugway 5J108-111), this protein is S-adenosylmethionine synthase.